The following is a 433-amino-acid chain: uncharacterized protein (433 aa).

Residues 36 to 58 (YYYYVQLAFKMLVGVLKNLPVVY) form a helical membrane-spanning segment. The tract at residues 169–433 (VRVPSRDLQP…GEGRDLPEDN (265 aa)) is disordered. Acidic residues-rich tracts occupy residues 216 to 227 (GEPGENGDESDE) and 234 to 254 (GDEDAAQSEQNNDDGMDYESD). Composition is skewed to basic and acidic residues over residues 265-280 (EPDRRHDAEAGERGSE), 354-364 (GGRRPARRDSP), and 422-433 (RRGEGRDLPEDN).

The protein resides in the host membrane. This is an uncharacterized protein from Psittacid herpesvirus 1 (isolate Amazon parrot/-/97-0001/1997) (PsHV-1).